We begin with the raw amino-acid sequence, 295 residues long: Acetylglutamate kinase (295 aa).

Residues 61 to 62 (GG), Arg83, and Asn182 contribute to the substrate site.

The protein belongs to the acetylglutamate kinase family. ArgB subfamily.

It localises to the cytoplasm. The catalysed reaction is N-acetyl-L-glutamate + ATP = N-acetyl-L-glutamyl 5-phosphate + ADP. Its pathway is amino-acid biosynthesis; L-arginine biosynthesis; N(2)-acetyl-L-ornithine from L-glutamate: step 2/4. Functionally, catalyzes the ATP-dependent phosphorylation of N-acetyl-L-glutamate. The protein is Acetylglutamate kinase of Clostridium acetobutylicum (strain ATCC 824 / DSM 792 / JCM 1419 / IAM 19013 / LMG 5710 / NBRC 13948 / NRRL B-527 / VKM B-1787 / 2291 / W).